A 363-amino-acid polypeptide reads, in one-letter code: Aminomethyltransferase (363 aa).

The protein belongs to the GcvT family. In terms of assembly, the glycine cleavage system is composed of four proteins: P, T, L and H.

It catalyses the reaction N(6)-[(R)-S(8)-aminomethyldihydrolipoyl]-L-lysyl-[protein] + (6S)-5,6,7,8-tetrahydrofolate = N(6)-[(R)-dihydrolipoyl]-L-lysyl-[protein] + (6R)-5,10-methylene-5,6,7,8-tetrahydrofolate + NH4(+). In terms of biological role, the glycine cleavage system catalyzes the degradation of glycine. The sequence is that of Aminomethyltransferase from Teredinibacter turnerae (strain ATCC 39867 / T7901).